The sequence spans 901 residues: HTH-type transcriptional regulator MalT (901 aa).

An ATP-binding site is contributed by 39 to 46; it reads SPAGYGKT. In terms of domain architecture, HTH luxR-type spans 829 to 894; it reads ELIRTSPLTQ…DAVQHAQQLL (66 aa). The segment at residues 853–872 is a DNA-binding region (H-T-H motif); the sequence is NEQIAGELEVAATTIKTHIR.

The protein belongs to the MalT family. Monomer in solution. Oligomerizes to an active state in the presence of the positive effectors ATP and maltotriose.

Its activity is regulated as follows. Activated by ATP and maltotriose, which are both required for DNA binding. Functionally, positively regulates the transcription of the maltose regulon whose gene products are responsible for uptake and catabolism of malto-oligosaccharides. Specifically binds to the promoter region of its target genes, recognizing a short DNA motif called the MalT box. In Escherichia coli (strain ATCC 8739 / DSM 1576 / NBRC 3972 / NCIMB 8545 / WDCM 00012 / Crooks), this protein is HTH-type transcriptional regulator MalT.